The sequence spans 390 residues: Putative nickel insertion protein (390 aa).

Belongs to the LarC family.

This chain is Putative nickel insertion protein, found in Geobacter metallireducens (strain ATCC 53774 / DSM 7210 / GS-15).